A 72-amino-acid chain; its full sequence is Putative membrane protein insertion efficiency factor (72 aa).

The protein belongs to the UPF0161 family.

It is found in the cell inner membrane. Functionally, could be involved in insertion of integral membrane proteins into the membrane. The sequence is that of Putative membrane protein insertion efficiency factor from Myxococcus xanthus (strain DK1622).